Reading from the N-terminus, the 285-residue chain is Inhibitor of growth protein 5 (285 aa).

The tract at residues 116-225 (EKASSTRAKS…ATHPSDVMDM (110 aa)) is disordered. The segment covering 131-149 (KKGRKKTKDSKTTGKKKKS) has biased composition (basic residues). The span at 160-178 (NNQSNANSSVNSSSNAGQG) shows a compositional bias: low complexity. A PHD-type zinc finger spans residues 232–281 (PTYCLCHQVSYGEMIGCDNPDCPIEWFHFACVGLTTKPKGKWFCPKCTQD). 8 residues coordinate Zn(2+): cysteine 235, cysteine 237, cysteine 248, cysteine 253, histidine 259, cysteine 262, cysteine 275, and cysteine 278.

This sequence belongs to the ING family. In terms of assembly, component of the Enok complex composed of at least Br140, enok, Eaf6 and Ing5.

It is found in the nucleus. Its subcellular location is the chromosome. In terms of biological role, component of the Enok complex which has a histone H3 acetyltransferase activity. The polypeptide is Inhibitor of growth protein 5 (Drosophila melanogaster (Fruit fly)).